Consider the following 512-residue polypeptide: Probable malate:quinone oxidoreductase (512 aa).

It belongs to the MQO family. It depends on FAD as a cofactor.

It catalyses the reaction (S)-malate + a quinone = a quinol + oxaloacetate. It participates in carbohydrate metabolism; tricarboxylic acid cycle; oxaloacetate from (S)-malate (quinone route): step 1/1. This Rhodococcus erythropolis (strain PR4 / NBRC 100887) protein is Probable malate:quinone oxidoreductase.